The chain runs to 438 residues: 3-phosphoshikimate 1-carboxyvinyltransferase (438 aa).

Residues Lys20, Ser21, and Arg25 each contribute to the 3-phosphoshikimate site. Lys20 is a phosphoenolpyruvate binding site. Residues Gly90 and Arg118 each coordinate phosphoenolpyruvate. 3-phosphoshikimate contacts are provided by Ser163, Ser164, Gln165, Ser191, Asp320, and Lys347. Gln165 serves as a coordination point for phosphoenolpyruvate. The active-site Proton acceptor is the Asp320. Phosphoenolpyruvate is bound by residues Arg351 and Arg392.

Belongs to the EPSP synthase family. In terms of assembly, monomer.

Its subcellular location is the cytoplasm. It carries out the reaction 3-phosphoshikimate + phosphoenolpyruvate = 5-O-(1-carboxyvinyl)-3-phosphoshikimate + phosphate. It functions in the pathway metabolic intermediate biosynthesis; chorismate biosynthesis. Its function is as follows. Catalyzes the transfer of the enolpyruvyl moiety of phosphoenolpyruvate (PEP) to the 5-hydroxyl of shikimate-3-phosphate (S3P) to produce enolpyruvyl shikimate-3-phosphate and inorganic phosphate. The sequence is that of 3-phosphoshikimate 1-carboxyvinyltransferase from Natronomonas pharaonis (strain ATCC 35678 / DSM 2160 / CIP 103997 / JCM 8858 / NBRC 14720 / NCIMB 2260 / Gabara) (Halobacterium pharaonis).